We begin with the raw amino-acid sequence, 753 residues long: Polyribonucleotide nucleotidyltransferase (753 aa).

Mg(2+)-binding residues include D488 and D494. Positions 555–614 (PKLYTMKINPEKIRDVIGKGGSTIRALTEETGTQIDIGEDGTITIASSDAAKADEAKRRI) constitute a KH domain. Residues 624–692 (GKIYEGPVTK…EKGRVKLSLK (69 aa)) enclose the S1 motif domain. Residues 692 to 753 (KALTERPAGM…EGEQQQQQQQ (62 aa)) form a disordered region. Over residues 699-739 (AGMERSDRPAPAEREFRQPREPRQQREFREPREPREPRDGG) the composition is skewed to basic and acidic residues.

Belongs to the polyribonucleotide nucleotidyltransferase family. The cofactor is Mg(2+).

The protein resides in the cytoplasm. The catalysed reaction is RNA(n+1) + phosphate = RNA(n) + a ribonucleoside 5'-diphosphate. Its function is as follows. Involved in mRNA degradation. Catalyzes the phosphorolysis of single-stranded polyribonucleotides processively in the 3'- to 5'-direction. This chain is Polyribonucleotide nucleotidyltransferase, found in Delftia acidovorans (strain DSM 14801 / SPH-1).